Here is a 1327-residue protein sequence, read N- to C-terminus: P-glycoprotein 14 (1327 aa).

Over residues 1 to 17 the composition is skewed to basic and acidic residues; the sequence is MAPKDDPDNRGFDDQRR. Residues 1–23 form a disordered region; sequence MAPKDDPDNRGFDDQRRPSQRST. Topologically, residues 1-104 are cytoplasmic; sequence MAPKDDPDNR…RYGKKFDYLL (104 aa). Residues 105-125 traverse the membrane as a helical segment; it reads LFIGTICAIISGVSQPILALV. Residues 106-394 enclose the ABC transmembrane type-1 1 domain; it reads FIGTICAIIS…ISPHMMVLLN (289 aa). The Extracellular portion of the chain corresponds to 126–151; sequence SGRVTNALLVYPPTSKQFRNKANENV. Residues 152-172 traverse the membrane as a helical segment; that stretch reads YIFLGIGIFISITNFIQYMCF. The Cytoplasmic segment spans residues 173-225; sequence QHCCTRVMAQMRHRFVYSVLRQNAGWFDKNHSGTITTKLNDSMERIREGIGDK. Residues 226–246 form a helical membrane-spanning segment; the sequence is LGVLLRGFAMLIAAIVVAYIY. E247 is a topological domain (extracellular). A helical transmembrane segment spans residues 248-268; it reads WRLASMMLGVAPTCCICMSLL. The Cytoplasmic portion of the chain corresponds to 269 to 331; sequence ARQMTSTTIK…KFAVWKGFWS (63 aa). Residues 332 to 352 form a helical membrane-spanning segment; it reads GFFGGLFFFWLFSFLGCGMLY. Topologically, residues 353–364 are extracellular; sequence GAYLLKVGIITT. Residues 365-385 traverse the membrane as a helical segment; sequence PGDVFIVVMSMLLGAYFLGLI. Residues 386–766 lie on the Cytoplasmic side of the membrane; it reads SPHMMVLLNA…NAKGNYLYMF (381 aa). Residues 429–665 form the ABC transporter 1 domain; the sequence is VKFENVHFRY…GGRYFDLVKA (237 aa). ATP is bound at residue 464 to 471; that stretch reads GHSGCGKS. Residues 671–721 are disordered; it reads DPEATEEFEEEEIDLDDTSRSSRRSSMTSARSGSEAFRRGNSLNDSFSGSK. The span at 673–686 shows a compositional bias: acidic residues; it reads EATEEFEEEEIDLD. A compositionally biased stretch (low complexity) spans 694–704; sequence RSSMTSARSGS. Positions 711–721 are enriched in polar residues; sequence NSLNDSFSGSK. One can recognise an ABC transmembrane type-1 2 domain in the interval 766-1053; sequence FLGTVFALIR…SAQYFPEFVK (288 aa). The helical transmembrane segment at 767-789 threads the bilayer; it reads LGTVFALIRGLELPALALIFGWV. Topologically, residues 790–805 are extracellular; it reads FEGFTFVPYGGRMMHR. The chain crosses the membrane as a helical span at residues 806 to 826; sequence MAMAVIAFASVGVGVWFSQLA. The Cytoplasmic segment spans residues 827 to 886; sequence SSVLFAVVSENLSMRFRVQSFRNLLYQDASYFDNPAHAPGKLITRLASDAPNIKAVVDAR. A helical transmembrane segment spans residues 887–907; sequence MLQVIYALAAIIANIAIAFIY. The Extracellular portion of the chain corresponds to 908 to 910; that stretch reads CWQ. The chain crosses the membrane as a helical span at residues 911–931; the sequence is IGILGTSLILLLAFVMIGLAY. The Cytoplasmic segment spans residues 932–996; it reads KISLMNVEQI…KGMIEAINYS (65 aa). The chain crosses the membrane as a helical span at residues 997-1017; the sequence is LTQSFMYFMMCFTYAVGIRII. Residues 1018–1030 lie on the Extracellular side of the membrane; that stretch reads YQGDKSSDDTFKG. Residues 1031-1051 traverse the membrane as a helical segment; sequence IIAMMLGAVAVMNSAQYFPEF. Over 1052–1327 the chain is Cytoplasmic; it reads VKAKTAAGML…KLIKKQDLAV (276 aa). Residues 1086–1322 enclose the ABC transporter 2 domain; that stretch reads ILFENVKFSY…KGRYYKLIKK (237 aa). An ATP-binding site is contributed by 1121–1128; that stretch reads GPSGSGKS.

Belongs to the ABC transporter superfamily. ABCB family. Multidrug resistance exporter (TC 3.A.1.201) subfamily. In terms of tissue distribution, expressed in pharyngeal epithelial cells that surround the anterior pharyngeal cuticle. Shares same expression pattern as sms-5.

The protein localises to the apical cell membrane. In terms of biological role, contributes to the establishment of a polar lipid barrier to block small molecule passage into the pharyngeal cuticle. Probably exports polar lipids into the developing pharyngeal cuticle to protect against xenobiotic insult. Likely functions in the same pathway as sphingomyelin synthase sms-5. The polypeptide is P-glycoprotein 14 (Caenorhabditis elegans).